The primary structure comprises 217 residues: Ribonuclease HII (217 aa).

In terms of domain architecture, RNase H type-2 spans 27–216 (SRVAGVDEAG…VKESIQEGVC (190 aa)). The a divalent metal cation site is built by aspartate 33, glutamate 34, and aspartate 126.

Belongs to the RNase HII family. The cofactor is Mn(2+). Mg(2+) serves as cofactor.

The protein resides in the cytoplasm. The catalysed reaction is Endonucleolytic cleavage to 5'-phosphomonoester.. Endonuclease that specifically degrades the RNA of RNA-DNA hybrids. The chain is Ribonuclease HII from Chlamydia trachomatis serovar A (strain ATCC VR-571B / DSM 19440 / HAR-13).